Consider the following 321-residue polypeptide: N-acetyllactosaminide alpha-1,3-galactosyltransferase-like 1 (321 aa).

The Cytoplasmic portion of the chain corresponds to 1–6; it reads MQYKKE. A helical; Signal-anchor for type II membrane protein membrane pass occupies residues 7-24; that stretch reads TLLLILLAILLALTQRYS. Residues 25–321 are Lumenal-facing; it reads RTKDHLQKMY…IKVAWQPRIT (297 aa). N-linked (GlcNAc...) asparagine glycosylation is found at asparagine 87 and asparagine 99. Substrate-binding positions include 95 to 100, 187 to 189, and 209 to 212; these read FATGNF, TAN, and HAWW. The Nucleophile role is filled by glutamate 277.

The protein belongs to the glycosyltransferase 6 family. Requires Mn(2+) as cofactor.

Its subcellular location is the golgi apparatus. It is found in the golgi stack membrane. The catalysed reaction is a beta-D-galactosyl-(1-&gt;4)-N-acetyl-beta-D-glucosaminyl derivative + UDP-alpha-D-galactose = an alpha-D-galactosyl-(1-&gt;3)-beta-D-galactosyl-(1-&gt;4)-N-acetyl-beta-D-glucosaminyl derivative + UDP + H(+). Its pathway is protein modification; protein glycosylation. Functionally, synthesizes the galactose-alpha(1,3)-galactose group by catalyzing the transfer of a galactose residue, with an alpha-1,3 linkage, on terminal lactosaminide (Gal-beta-1,4-GlcNAc-R) disaccharide borne by a glycoprotein or a glycolipid. The protein is N-acetyllactosaminide alpha-1,3-galactosyltransferase-like 1 (Ggta1l1) of Rattus norvegicus (Rat).